The following is a 355-amino-acid chain: Protein ATP1B4 (355 aa).

Residues 1–108 (MRRQLRSRRA…SLARTGQSWS (108 aa)) are Nuclear-facing. Residues 33–77 (ADEEEEAEEEARVMVVPDLEEEEEEEEEKEEEEKEEEDSHSQETD) form a disordered region. Residues 50-68 (DLEEEEEEEEEKEEEEKEE) are compositionally biased toward acidic residues. Residues 109–129 (LILVIYFFFYASLAAVITLCM) traverse the membrane as a helical; Signal-anchor for type II membrane protein segment. Residues 130-355 (YTLFLTISPY…RVIFTLNIET (226 aa)) are Perinuclear space-facing.

It belongs to the X(+)/potassium ATPases subunit beta family. Associates with a SMAD7-transcriptional complex. Interacts with SNW1 and TOR1AIP1. Does not associate with known Na,K-ATPase alpha-subunits.

It localises to the nucleus inner membrane. In terms of biological role, may act as a transcriptional coregulator during muscle development through its interaction with SNW1. Has lost its ancestral function as a Na,K-ATPase beta-subunit. The sequence is that of Protein ATP1B4 (ATP1B4) from Bos taurus (Bovine).